A 43-amino-acid polypeptide reads, in one-letter code: Protein PsbN (43 aa).

A helical membrane pass occupies residues 7–27; sequence ITIFLSCFLVGVTGYALYTAF.

Belongs to the PsbN family.

The protein resides in the plastid. It is found in the chloroplast thylakoid membrane. Its function is as follows. May play a role in photosystem I and II biogenesis. This chain is Protein PsbN, found in Klebsormidium bilatum (Filamentous green alga).